We begin with the raw amino-acid sequence, 34 residues long: Corticostatin-2 (34 aa).

Disulfide bonds link cysteine 3–cysteine 32, cysteine 5–cysteine 21, and cysteine 11–cysteine 31.

This sequence belongs to the alpha-defensin family.

It is found in the secreted. Microbicidal activity and inhibits corticotropin (ACTH) stimulated corticosterone production. The sequence is that of Corticostatin-2 from Oryctolagus cuniculus (Rabbit).